The following is a 377-amino-acid chain: Succinyl-diaminopimelate desuccinylase (377 aa).

His68 serves as a coordination point for Zn(2+). Residue Asp70 is part of the active site. Asp101 contributes to the Zn(2+) binding site. Catalysis depends on Glu135, which acts as the Proton acceptor. Positions 136, 164, and 350 each coordinate Zn(2+).

Belongs to the peptidase M20A family. DapE subfamily. Homodimer. The cofactor is Zn(2+). Requires Co(2+) as cofactor.

It catalyses the reaction N-succinyl-(2S,6S)-2,6-diaminopimelate + H2O = (2S,6S)-2,6-diaminopimelate + succinate. It participates in amino-acid biosynthesis; L-lysine biosynthesis via DAP pathway; LL-2,6-diaminopimelate from (S)-tetrahydrodipicolinate (succinylase route): step 3/3. Functionally, catalyzes the hydrolysis of N-succinyl-L,L-diaminopimelic acid (SDAP), forming succinate and LL-2,6-diaminopimelate (DAP), an intermediate involved in the bacterial biosynthesis of lysine and meso-diaminopimelic acid, an essential component of bacterial cell walls. This chain is Succinyl-diaminopimelate desuccinylase, found in Acinetobacter baumannii (strain AB307-0294).